The chain runs to 113 residues: Large ribosomal subunit protein eL31A (113 aa).

This sequence belongs to the eukaryotic ribosomal protein eL31 family. Component of the large ribosomal subunit (LSU). Mature yeast ribosomes consist of a small (40S) and a large (60S) subunit. The 40S small subunit contains 1 molecule of ribosomal RNA (18S rRNA) and 33 different proteins (encoded by 57 genes). The large 60S subunit contains 3 rRNA molecules (25S, 5.8S and 5S rRNA) and 46 different proteins (encoded by 81 genes).

The protein resides in the cytoplasm. Component of the ribosome, a large ribonucleoprotein complex responsible for the synthesis of proteins in the cell. The small ribosomal subunit (SSU) binds messenger RNAs (mRNAs) and translates the encoded message by selecting cognate aminoacyl-transfer RNA (tRNA) molecules. The large subunit (LSU) contains the ribosomal catalytic site termed the peptidyl transferase center (PTC), which catalyzes the formation of peptide bonds, thereby polymerizing the amino acids delivered by tRNAs into a polypeptide chain. The nascent polypeptides leave the ribosome through a tunnel in the LSU and interact with protein factors that function in enzymatic processing, targeting, and the membrane insertion of nascent chains at the exit of the ribosomal tunnel. The polypeptide is Large ribosomal subunit protein eL31A (Saccharomyces cerevisiae (strain ATCC 204508 / S288c) (Baker's yeast)).